Here is a 275-residue protein sequence, read N- to C-terminus: Homeobox-leucine zipper protein ATHB-17 (275 aa).

Residues 95–143 form a disordered region; the sequence is SSPLSDEGSGGGRDQLRLDMNRLPSSEDGDDEEFSHDDGSAPPRKKLRL. The segment at residues 136–195 is a DNA-binding region (homeobox); it reads PPRKKLRLTREQSRLLEDSFRQNHTLNPKQKEVLAKHLMLRPRQIEVWFQNRRARSKLKQ. The interval 203–224 is leucine-zipper; it reads LKRWFGSLTEENHRLHREVEEL. A disordered region spans residues 252-275; that stretch reads AASPSRAVVPVPAKKTFPPQERDR.

Belongs to the HD-ZIP homeobox family. Class II subfamily.

It is found in the nucleus. Functionally, probable transcription factor. In Arabidopsis thaliana (Mouse-ear cress), this protein is Homeobox-leucine zipper protein ATHB-17 (ATHB-17).